The chain runs to 493 residues: Guanosine-5'-triphosphate,3'-diphosphate pyrophosphatase (493 aa).

It belongs to the GppA/Ppx family. GppA subfamily.

The enzyme catalyses guanosine 3'-diphosphate 5'-triphosphate + H2O = guanosine 3',5'-bis(diphosphate) + phosphate + H(+). The protein operates within purine metabolism; ppGpp biosynthesis; ppGpp from GTP: step 2/2. Its function is as follows. Catalyzes the conversion of pppGpp to ppGpp. Guanosine pentaphosphate (pppGpp) is a cytoplasmic signaling molecule which together with ppGpp controls the 'stringent response', an adaptive process that allows bacteria to respond to amino acid starvation, resulting in the coordinated regulation of numerous cellular activities. The chain is Guanosine-5'-triphosphate,3'-diphosphate pyrophosphatase from Salmonella heidelberg (strain SL476).